Here is a 1343-residue protein sequence, read N- to C-terminus: DNA-directed RNA polymerase subunit beta (1343 aa).

The protein belongs to the RNA polymerase beta chain family. As to quaternary structure, the RNAP catalytic core consists of 2 alpha, 1 beta, 1 beta' and 1 omega subunit. When a sigma factor is associated with the core the holoenzyme is formed, which can initiate transcription.

It catalyses the reaction RNA(n) + a ribonucleoside 5'-triphosphate = RNA(n+1) + diphosphate. Functionally, DNA-dependent RNA polymerase catalyzes the transcription of DNA into RNA using the four ribonucleoside triphosphates as substrates. The polypeptide is DNA-directed RNA polymerase subunit beta (Haemophilus influenzae (strain ATCC 51907 / DSM 11121 / KW20 / Rd)).